We begin with the raw amino-acid sequence, 49 residues long: MRNNIILGNNETGERIYLTSKNKRNTPDRLQLKKYSPKLRKRVVFTEVK.

Belongs to the bacterial ribosomal protein bL33 family.

In Lacticaseibacillus casei (strain BL23) (Lactobacillus casei), this protein is Large ribosomal subunit protein bL33.